The sequence spans 264 residues: Indole-3-glycerol phosphate synthase (264 aa).

It belongs to the TrpC family.

It catalyses the reaction 1-(2-carboxyphenylamino)-1-deoxy-D-ribulose 5-phosphate + H(+) = (1S,2R)-1-C-(indol-3-yl)glycerol 3-phosphate + CO2 + H2O. The protein operates within amino-acid biosynthesis; L-tryptophan biosynthesis; L-tryptophan from chorismate: step 4/5. This chain is Indole-3-glycerol phosphate synthase, found in Albidiferax ferrireducens (strain ATCC BAA-621 / DSM 15236 / T118) (Rhodoferax ferrireducens).